Reading from the N-terminus, the 643-residue chain is Translation factor GUF1, mitochondrial (643 aa).

A mitochondrion-targeting transit peptide spans 1-18 (MLASQAIKRIFHRSWKPL). The tr-type G domain maps to 43–226 (ENYRNFSIVA…AIIDRIPPPT (184 aa)). GTP-binding positions include 52–59 (AHIDHGKS), 118–122 (DTPGH), and 172–175 (NKID).

The protein belongs to the TRAFAC class translation factor GTPase superfamily. Classic translation factor GTPase family. LepA subfamily.

The protein localises to the mitochondrion inner membrane. It carries out the reaction GTP + H2O = GDP + phosphate + H(+). In terms of biological role, promotes mitochondrial protein synthesis. May act as a fidelity factor of the translation reaction, by catalyzing a one-codon backward translocation of tRNAs on improperly translocated ribosomes. Binds to mitochondrial ribosomes in a GTP-dependent manner. The chain is Translation factor GUF1, mitochondrial from Zygosaccharomyces rouxii (strain ATCC 2623 / CBS 732 / NBRC 1130 / NCYC 568 / NRRL Y-229).